Here is a 184-residue protein sequence, read N- to C-terminus: dITP/XTP pyrophosphatase (184 aa).

7–12 is a binding site for substrate; sequence TSNPGK. Positions 36 and 65 each coordinate Mg(2+). D65 (proton acceptor) is an active-site residue. Residues S66, 139 to 142, K162, and 167 to 168 contribute to the substrate site; these read FGFD and HR.

It belongs to the HAM1 NTPase family. In terms of assembly, homodimer. Mg(2+) is required as a cofactor.

It carries out the reaction XTP + H2O = XMP + diphosphate + H(+). The enzyme catalyses dITP + H2O = dIMP + diphosphate + H(+). It catalyses the reaction ITP + H2O = IMP + diphosphate + H(+). In terms of biological role, pyrophosphatase that catalyzes the hydrolysis of nucleoside triphosphates to their monophosphate derivatives, with a high preference for the non-canonical purine nucleotides XTP (xanthosine triphosphate), dITP (deoxyinosine triphosphate) and ITP. Seems to function as a house-cleaning enzyme that removes non-canonical purine nucleotides from the nucleotide pool, thus preventing their incorporation into DNA/RNA and avoiding chromosomal lesions. This Thermococcus kodakarensis (strain ATCC BAA-918 / JCM 12380 / KOD1) (Pyrococcus kodakaraensis (strain KOD1)) protein is dITP/XTP pyrophosphatase.